A 310-amino-acid polypeptide reads, in one-letter code: Protoheme IX farnesyltransferase (310 aa).

9 helical membrane passes run 37–57, 64–84, 113–133, 134–154, 159–181, 186–208, 215–237, 257–277, and 290–310; these read LITVFAGYVVAASYLTDDVLL, LTLLWTLLGSGLVIAGSCYLN, ILALGLGILATGTVLLLIVNH, VAAVFGLIGSFVYVVIYTMWL, TINTVVGGISGAVPPIIGFAAVT, IDAWILFLIMFVWQPPHFLALAM, RAAGIPMLPVVNGFAITKRQIVW, MLVMAVLGGYWLYMGLKGLKI, and MFFFSLFYFTAWIVTVVLVSL.

The protein belongs to the UbiA prenyltransferase family. Protoheme IX farnesyltransferase subfamily. In terms of assembly, interacts with CtaA.

Its subcellular location is the cell membrane. It catalyses the reaction heme b + (2E,6E)-farnesyl diphosphate + H2O = Fe(II)-heme o + diphosphate. It participates in porphyrin-containing compound metabolism; heme O biosynthesis; heme O from protoheme: step 1/1. Functionally, converts heme B (protoheme IX) to heme O by substitution of the vinyl group on carbon 2 of heme B porphyrin ring with a hydroxyethyl farnesyl side group. The sequence is that of Protoheme IX farnesyltransferase from Exiguobacterium sibiricum (strain DSM 17290 / CCUG 55495 / CIP 109462 / JCM 13490 / 255-15).